The primary structure comprises 399 residues: Phospholipase C (399 aa).

Residues 1 to 28 (MNKKKILKFICSAVLSFTLFSGYKSYAW) form the signal peptide. Zn(2+) is bound by residues tryptophan 28, histidine 38, aspartate 83, histidine 95, histidine 153, aspartate 157, histidine 163, histidine 175, and glutamate 179. The region spanning 29 to 277 (DGKVDGTGTH…NEVSGTINTT (249 aa)) is the Zn-dependent PLC domain. The interval 275–282 (NTTENSKI) is linker. In terms of domain architecture, PLAT spans 283-399 (NEIMVVIKTA…DNKTFYINNK (117 aa)). Positions 298, 299, 300, 320, 321, 323, 324, 325, and 363 each coordinate Ca(2+).

The protein belongs to the bacterial zinc-metallophospholipase C family. Ca(2+) is required as a cofactor. The cofactor is Zn(2+).

The protein localises to the secreted. It catalyses the reaction a 1,2-diacyl-sn-glycero-3-phosphocholine + H2O = phosphocholine + a 1,2-diacyl-sn-glycerol + H(+). Bacterial hemolysins are exotoxins that attack blood cell membranes and cause cell rupture. Binds to eukaryotic membranes where it hydrolyzes phosphatidylcholine, sphingomyelin and phosphatidylethanolamine. The diacylglycerol produced can activate both the arachidonic acid pathway, leading to modulation of the inflammatory response cascade and thrombosis, and protein kinase C, leading to activation of eukaryotic phospholipases and further membrane damage. The sequence is that of Phospholipase C (plc) from Clostridium haemolyticum.